Here is a 153-residue protein sequence, read N- to C-terminus: Lipoprotein signal peptidase (153 aa).

2 helical membrane passes run 52 to 72 and 81 to 101; these read ILAGQMWFFYVITIAVIIGIV and GQMLLGISLGLMLGGAAGNFI. Residues Asp-111 and Asp-129 contribute to the active site. Residues 124-144 form a helical membrane-spanning segment; it reads IFNIADSSLCVGVILLFIHML.

The protein belongs to the peptidase A8 family.

It localises to the cell membrane. It carries out the reaction Release of signal peptides from bacterial membrane prolipoproteins. Hydrolyzes -Xaa-Yaa-Zaa-|-(S,diacylglyceryl)Cys-, in which Xaa is hydrophobic (preferably Leu), and Yaa (Ala or Ser) and Zaa (Gly or Ala) have small, neutral side chains.. It participates in protein modification; lipoprotein biosynthesis (signal peptide cleavage). In terms of biological role, this protein specifically catalyzes the removal of signal peptides from prolipoproteins. This is Lipoprotein signal peptidase from Bacillus velezensis (strain DSM 23117 / BGSC 10A6 / LMG 26770 / FZB42) (Bacillus amyloliquefaciens subsp. plantarum).